The sequence spans 146 residues: Angiogenin (146 aa).

An N-terminal signal peptide occupies residues 1-24 (MVMGLGLFLLVFMLGLGLTPPTLA). Residue Gln-25 is modified to Pyrrolidone carboxylic acid. The Proton acceptor role is filled by His-37. Position 45 (Arg-45) interacts with tRNA. Cystine bridges form between Cys-50/Cys-105, Cys-63/Cys-116, and Cys-81/Cys-131. A Nucleolar localization signal motif is present at residues 55–59 (RRRGL). 2 residues coordinate tRNA: Cys-105 and Ile-127. The active-site Proton donor is the His-138.

This sequence belongs to the pancreatic ribonuclease family. As to quaternary structure, homodimer. Interacts with RNH1; inhibiting ANG ribonuclease activity. Interacts with PCNA.

It is found in the secreted. The protein localises to the nucleus. It localises to the nucleolus. Its subcellular location is the cytoplasm. The protein resides in the stress granule. Its activity is regulated as follows. Has weak tRNA ribonuclease activity by itself due to partial autoinhibition by its C-terminus, which folds into a short alpha-helix that partially occludes the substrate-binding site. In absence of stress, the ribonuclease activity is inhibited by RNH1 in the cytoplasm. In response to stress, dissociates from RNH1 in the cytoplasm and associates with cytoplasmic ribosomes with vacant A-sites: ribosomes directly activate the tRNA ribonuclease activity of ANG by refolding the C-terminal alpha-helix. In response to stress, the angiogenic activity of ANG is inhibited by RNH1 in the nucleus. Secreted ribonuclease that can either promote or restrict cell proliferation of target cells, depending on the context. Endocytosed in target cells via its receptor PLXNB2 and translocates to the cytoplasm or nucleus. Under stress conditions, localizes to the cytoplasm and promotes the assembly of stress granules (SGs): specifically cleaves a subset of tRNAs within anticodon loops to produce tRNA-derived stress-induced fragments (tiRNAs), resulting in translation repression and inhibition of cell proliferation. tiRNas also prevent formation of apoptosome, thereby promoting cell survival. Preferentially cleaves RNAs between a pyrimidine and an adenosine residue, suggesting that it cleaves the anticodon loop of tRNA(Ala) (32-UUAGCAU-38) after positions 33 and 36. Cleaves a subset of tRNAs, including tRNA(Ala), tRNA(Glu), tRNA(Gly), tRNA(Lys), tRNA(Val), tRNA(His), tRNA(Asp) and tRNA(Sec). Under growth conditions and in differentiated cells, translocates to the nucleus and stimulates ribosomal RNA (rRNA) transcription, including that containing the initiation site sequences of 45S rRNA, thereby promoting cell growth and proliferation. Angiogenin induces vascularization of normal and malignant tissues via its ability to promote rRNA transcription. Involved in hematopoietic stem and progenitor cell (HSPC) growth and survival by promoting rRNA transcription in growth conditions and inhibiting translation in response to stress, respectively. Mediates the crosstalk between myeloid and intestinal epithelial cells to protect the intestinal epithelial barrier integrity: secreted by myeloid cells and promotes intestinal epithelial cells proliferation and survival. Also mediates osteoclast-endothelial cell crosstalk in growing bone: produced by osteoclasts and protects the neighboring vascular cells against senescence by promoting rRNA transcription. This Rhinopithecus avunculus (Tonkin snub-nosed monkey) protein is Angiogenin (ANG).